The sequence spans 395 residues: S-adenosylmethionine synthase (395 aa).

Residue His-15 coordinates ATP. Asp-17 contacts Mg(2+). Position 43 (Glu-43) interacts with K(+). Gln-99 contacts L-methionine. A flexible loop region spans residues 99 to 109 (QSPDIAMGVNE). ATP contacts are provided by residues 174–176 (DGK), 240–241 (RF), Asp-249, 255–256 (RK), Ala-272, and Lys-276. L-methionine is bound at residue Asp-249. Lys-280 lines the L-methionine pocket.

This sequence belongs to the AdoMet synthase family. As to quaternary structure, homotetramer; dimer of dimers. It depends on Mg(2+) as a cofactor. K(+) serves as cofactor.

It localises to the cytoplasm. The catalysed reaction is L-methionine + ATP + H2O = S-adenosyl-L-methionine + phosphate + diphosphate. It functions in the pathway amino-acid biosynthesis; S-adenosyl-L-methionine biosynthesis; S-adenosyl-L-methionine from L-methionine: step 1/1. Functionally, catalyzes the formation of S-adenosylmethionine (AdoMet) from methionine and ATP. The overall synthetic reaction is composed of two sequential steps, AdoMet formation and the subsequent tripolyphosphate hydrolysis which occurs prior to release of AdoMet from the enzyme. The polypeptide is S-adenosylmethionine synthase (Moorella thermoacetica (strain ATCC 39073 / JCM 9320)).